Reading from the N-terminus, the 342-residue chain is tRNA N6-adenosine threonylcarbamoyltransferase (342 aa).

Positions 112 and 116 each coordinate Fe cation. Substrate contacts are provided by residues 134–138 (LASGG), D167, G180, and N280. D308 contacts Fe cation.

It belongs to the KAE1 / TsaD family. Fe(2+) serves as cofactor.

Its subcellular location is the cytoplasm. It catalyses the reaction L-threonylcarbamoyladenylate + adenosine(37) in tRNA = N(6)-L-threonylcarbamoyladenosine(37) in tRNA + AMP + H(+). In terms of biological role, required for the formation of a threonylcarbamoyl group on adenosine at position 37 (t(6)A37) in tRNAs that read codons beginning with adenine. Is involved in the transfer of the threonylcarbamoyl moiety of threonylcarbamoyl-AMP (TC-AMP) to the N6 group of A37, together with TsaE and TsaB. TsaD likely plays a direct catalytic role in this reaction. This chain is tRNA N6-adenosine threonylcarbamoyltransferase, found in Rickettsia canadensis (strain McKiel).